A 417-amino-acid chain; its full sequence is Probable pectate lyase 20 (417 aa).

The N-terminal stretch at 1–25 (MAVTQILVVFASALLLSMFFTGVDS) is a signal peptide. Asn-29 and Asn-53 each carry an N-linked (GlcNAc...) asparagine glycan. Asp-215, Asp-239, and Asp-243 together coordinate Ca(2+). Residue Arg-295 is part of the active site.

The protein belongs to the polysaccharide lyase 1 family. Ca(2+) is required as a cofactor.

The catalysed reaction is Eliminative cleavage of (1-&gt;4)-alpha-D-galacturonan to give oligosaccharides with 4-deoxy-alpha-D-galact-4-enuronosyl groups at their non-reducing ends.. It participates in glycan metabolism; pectin degradation; 2-dehydro-3-deoxy-D-gluconate from pectin: step 2/5. This chain is Probable pectate lyase 20, found in Arabidopsis thaliana (Mouse-ear cress).